The sequence spans 211 residues: Molybdenum cofactor guanylyltransferase (211 aa).

GTP contacts are provided by residues 12-14 (LAG), K25, N55, D73, and D103. Residue D103 participates in Mg(2+) binding.

This sequence belongs to the MobA family. As to quaternary structure, monomer. The cofactor is Mg(2+).

Its subcellular location is the cytoplasm. It catalyses the reaction Mo-molybdopterin + GTP + H(+) = Mo-molybdopterin guanine dinucleotide + diphosphate. Transfers a GMP moiety from GTP to Mo-molybdopterin (Mo-MPT) cofactor (Moco or molybdenum cofactor) to form Mo-molybdopterin guanine dinucleotide (Mo-MGD) cofactor. This chain is Molybdenum cofactor guanylyltransferase, found in Albidiferax ferrireducens (strain ATCC BAA-621 / DSM 15236 / T118) (Rhodoferax ferrireducens).